A 352-amino-acid chain; its full sequence is UDP-N-acetylglucosamine--N-acetylmuramyl-(pentapeptide) pyrophosphoryl-undecaprenol N-acetylglucosamine transferase 2 (352 aa).

Residues 11 to 13, R164, S194, and Q289 contribute to the UDP-N-acetyl-alpha-D-glucosamine site; that span reads SAG.

It belongs to the glycosyltransferase 28 family. MurG subfamily.

The protein localises to the cell membrane. The enzyme catalyses di-trans,octa-cis-undecaprenyl diphospho-N-acetyl-alpha-D-muramoyl-L-alanyl-D-glutamyl-meso-2,6-diaminopimeloyl-D-alanyl-D-alanine + UDP-N-acetyl-alpha-D-glucosamine = di-trans,octa-cis-undecaprenyl diphospho-[N-acetyl-alpha-D-glucosaminyl-(1-&gt;4)]-N-acetyl-alpha-D-muramoyl-L-alanyl-D-glutamyl-meso-2,6-diaminopimeloyl-D-alanyl-D-alanine + UDP + H(+). It functions in the pathway cell wall biogenesis; peptidoglycan biosynthesis. Cell wall formation. Catalyzes the transfer of a GlcNAc subunit on undecaprenyl-pyrophosphoryl-MurNAc-pentapeptide (lipid intermediate I) to form undecaprenyl-pyrophosphoryl-MurNAc-(pentapeptide)GlcNAc (lipid intermediate II). The sequence is that of UDP-N-acetylglucosamine--N-acetylmuramyl-(pentapeptide) pyrophosphoryl-undecaprenol N-acetylglucosamine transferase 2 from Bacillus anthracis.